The following is a 408-amino-acid chain: DNA primase DnaG (408 aa).

The Toprim domain maps to 165–243 (PELIIVEGRA…KIDYVARAPT (79 aa)). Mg(2+)-binding residues include Glu-171, Asp-216, and Asp-218.

Belongs to the archaeal DnaG primase family. Forms a ternary complex with MCM helicase and DNA. Component of the archaeal exosome complex. Mg(2+) serves as cofactor.

The enzyme catalyses ssDNA + n NTP = ssDNA/pppN(pN)n-1 hybrid + (n-1) diphosphate.. In terms of biological role, RNA polymerase that catalyzes the synthesis of short RNA molecules used as primers for DNA polymerase during DNA replication. Also part of the exosome, which is a complex involved in RNA degradation. Acts as a poly(A)-binding protein that enhances the interaction between heteromeric, adenine-rich transcripts and the exosome. This is DNA primase DnaG from Sulfurisphaera tokodaii (strain DSM 16993 / JCM 10545 / NBRC 100140 / 7) (Sulfolobus tokodaii).